Reading from the N-terminus, the 189-residue chain is Peptidyl-tRNA hydrolase (189 aa).

Tyr-15 contacts tRNA. Residue His-20 is the Proton acceptor of the active site. 3 residues coordinate tRNA: Phe-66, Asn-68, and Asn-114.

Belongs to the PTH family. As to quaternary structure, monomer.

It localises to the cytoplasm. The enzyme catalyses an N-acyl-L-alpha-aminoacyl-tRNA + H2O = an N-acyl-L-amino acid + a tRNA + H(+). In terms of biological role, hydrolyzes ribosome-free peptidyl-tRNAs (with 1 or more amino acids incorporated), which drop off the ribosome during protein synthesis, or as a result of ribosome stalling. Catalyzes the release of premature peptidyl moieties from peptidyl-tRNA molecules trapped in stalled 50S ribosomal subunits, and thus maintains levels of free tRNAs and 50S ribosomes. The polypeptide is Peptidyl-tRNA hydrolase (Dichelobacter nodosus (strain VCS1703A)).